Reading from the N-terminus, the 255-residue chain is tRNA pseudouridine synthase A (255 aa).

Asp52 (nucleophile) is an active-site residue. Residue Tyr111 coordinates substrate.

It belongs to the tRNA pseudouridine synthase TruA family. As to quaternary structure, homodimer.

It catalyses the reaction uridine(38/39/40) in tRNA = pseudouridine(38/39/40) in tRNA. Formation of pseudouridine at positions 38, 39 and 40 in the anticodon stem and loop of transfer RNAs. The sequence is that of tRNA pseudouridine synthase A from Cereibacter sphaeroides (strain ATCC 17029 / ATH 2.4.9) (Rhodobacter sphaeroides).